The chain runs to 228 residues: Deoxyribose-phosphate aldolase (228 aa).

Aspartate 93 functions as the Proton donor/acceptor in the catalytic mechanism. The active-site Schiff-base intermediate with acetaldehyde is lysine 159. Lysine 188 functions as the Proton donor/acceptor in the catalytic mechanism.

This sequence belongs to the DeoC/FbaB aldolase family. DeoC type 1 subfamily.

Its subcellular location is the cytoplasm. The catalysed reaction is 2-deoxy-D-ribose 5-phosphate = D-glyceraldehyde 3-phosphate + acetaldehyde. It functions in the pathway carbohydrate degradation; 2-deoxy-D-ribose 1-phosphate degradation; D-glyceraldehyde 3-phosphate and acetaldehyde from 2-deoxy-alpha-D-ribose 1-phosphate: step 2/2. Catalyzes a reversible aldol reaction between acetaldehyde and D-glyceraldehyde 3-phosphate to generate 2-deoxy-D-ribose 5-phosphate. The chain is Deoxyribose-phosphate aldolase from Carboxydothermus hydrogenoformans (strain ATCC BAA-161 / DSM 6008 / Z-2901).